We begin with the raw amino-acid sequence, 307 residues long: Ornithine carbamoyltransferase (307 aa).

Carbamoyl phosphate contacts are provided by residues 50-53 (STRT), Q77, R101, and 128-131 (HPCQ). Residues N160, D224, and 228–229 (SM) each bind L-ornithine. Carbamoyl phosphate is bound by residues 264 to 265 (CL) and R292.

The protein belongs to the aspartate/ornithine carbamoyltransferase superfamily. OTCase family.

The protein resides in the cytoplasm. The catalysed reaction is carbamoyl phosphate + L-ornithine = L-citrulline + phosphate + H(+). The protein operates within amino-acid biosynthesis; L-arginine biosynthesis; L-arginine from L-ornithine and carbamoyl phosphate: step 1/3. With respect to regulation, inhibited by arginine, norvaline. Its function is as follows. Reversibly catalyzes the transfer of the carbamoyl group from carbamoyl phosphate (CP) to the N(epsilon) atom of ornithine (ORN) to produce L-citrulline, which is a substrate for argininosuccinate synthetase, the enzyme involved in the final step in arginine biosynthesis. The sequence is that of Ornithine carbamoyltransferase from Mycolicibacterium smegmatis (strain ATCC 700084 / mc(2)155) (Mycobacterium smegmatis).